Here is a 408-residue protein sequence, read N- to C-terminus: Putative UPF0496 protein 2 (408 aa).

The next 2 helical transmembrane spans lie at 224–244 (RIAR…AIVA) and 252–272 (ALVG…GAAR). The segment at 385–408 (MARGLPPPSPATVTTTSEERLTSS) is disordered.

The protein belongs to the UPF0496 family.

Its subcellular location is the membrane. This chain is Putative UPF0496 protein 2, found in Oryza sativa subsp. indica (Rice).